We begin with the raw amino-acid sequence, 103 residues long: MALRSLGTTGLHIPPLVFGGNVFGWTVDEQQSFSLLDALLERGLNAIDTADVYSAWAPGNKGGESETILGKWFAAHPGAREKITLFTKVGSDLKAQRLMLRTM.

This is an uncharacterized protein from Pseudescherichia vulneris (Escherichia vulneris).